A 187-amino-acid polypeptide reads, in one-letter code: Alpha-D-galactose-binding lectin (187 aa).

The first 37 residues, methionine 1–lysine 37, serve as a signal peptide directing secretion. Threonine 39 carries the post-translational modification N-acetylthreonine. N-acetyl-alpha-D-galactosamine contacts are provided by residues histidine 53 to glycine 56, aspartate 64, aspartate 72 to arginine 76, histidine 101, glycine 104, glutamate 112, aspartate 120 to histidine 122, histidine 145, glycine 148, glutamate 156, and aspartate 164 to histidine 166.

In terms of assembly, homodimer. Highest expression in the posterior part of the mantle. Highly expressed in gills and to a lesser extent in mid mantle and anterior muscle. Lowest expression in digestive gland and posterior adductor muscle. Scarcely detectable in hemocytes.

Agglutination of E.coli is inhibited by alpha-galactoside melibiose, but not by beta-galactoside lactose. In terms of biological role, alpha-D-galactose-binding lectin. Binds D-GalNAc, but not glucose or its derivatives. Has hemagglutinating activity towards rabbit erythrocytes. Agglutinates bacteria. Has bacteriostatic activity on both Gram-positive and Gram-negative bacteria including B.subtilis, S.aureus, E.coli and V.parahaemolyticus, respectively. Has a dose-dependent cytotoxic effect on the human globotriaosylceramide (Gb3)-expressing Epstein-Barr virus (EBV)-positive Burkitt's lymphoma (Raji) cell line. Has dose-dependent cytotoxic effect on another Burkitt's lymphoma (Ramos) cell line, which does not possess the EBV genome, but also expresses Gb3. Binds to Gb3 in these cells leading to phosphorylation of MEK1/2, ERK1/2, JNK and p38 kinase, activation of caspase-9/3 and to expression of p21 and tumor necrosis factor (TNF)-alpha. No cytotoxic effect on the human chronic myelogenous leukemia (K-562) cell line, which does not express Gb3. May be involved in innate immunity acting as an antibacterial or antifungal agent. May be a pattern recognition receptor (PRR) involved in recognition of glycans found on parasitic or symbiotic microorganisms. This Mytilus galloprovincialis (Mediterranean mussel) protein is Alpha-D-galactose-binding lectin.